The primary structure comprises 307 residues: D-alanine--D-alanine ligase (307 aa).

The ATP-grasp domain occupies 101–301 (RDVLAAAGVP…FGELVRWMVD (201 aa)). An ATP-binding site is contributed by 128–182 (LPPPYVIKPLGEGSSFGVFIVREDQAYPPQELTRSDWAFGNRVLVESYIGGRELT). Residues D251, E268, and N270 each coordinate Mg(2+).

Belongs to the D-alanine--D-alanine ligase family. Mg(2+) is required as a cofactor. Requires Mn(2+) as cofactor.

It localises to the cytoplasm. The catalysed reaction is 2 D-alanine + ATP = D-alanyl-D-alanine + ADP + phosphate + H(+). It functions in the pathway cell wall biogenesis; peptidoglycan biosynthesis. Its function is as follows. Cell wall formation. The polypeptide is D-alanine--D-alanine ligase (Beijerinckia indica subsp. indica (strain ATCC 9039 / DSM 1715 / NCIMB 8712)).